Consider the following 215-residue polypeptide: FMN-dependent NADH:quinone oxidoreductase (215 aa).

Position 17–19 (17–19 (SAS)) interacts with FMN.

Belongs to the azoreductase type 1 family. As to quaternary structure, homodimer. Requires FMN as cofactor.

The enzyme catalyses 2 a quinone + NADH + H(+) = 2 a 1,4-benzosemiquinone + NAD(+). It catalyses the reaction N,N-dimethyl-1,4-phenylenediamine + anthranilate + 2 NAD(+) = 2-(4-dimethylaminophenyl)diazenylbenzoate + 2 NADH + 2 H(+). Quinone reductase that provides resistance to thiol-specific stress caused by electrophilic quinones. Functionally, also exhibits azoreductase activity. Catalyzes the reductive cleavage of the azo bond in aromatic azo compounds to the corresponding amines. In Clostridium botulinum (strain Alaska E43 / Type E3), this protein is FMN-dependent NADH:quinone oxidoreductase.